Reading from the N-terminus, the 344-residue chain is Gas vesicle ATPase GvpN2 (344 aa).

Residues 1–55 (MTDTSRNRKVRGSKIRSSRSDKRQSRGSEDKELKRLADARDTDSEQAGDRVGDAF) are disordered. Over residues 7–17 (NRKVRGSKIRS) the composition is skewed to basic residues. Residues 18–52 (SRSDKRQSRGSEDKELKRLADARDTDSEQAGDRVG) are compositionally biased toward basic and acidic residues. Residue 89 to 96 (GPTGCGKT) participates in ATP binding.

The protein belongs to the CbbQ/NirQ/NorQ/GpvN family. As to quaternary structure, forms homodimers, a GvpN-GvpO heterodimer, interacts with GvpC and GvpL, might interact with GvpA.

The protein localises to the gas vesicle. The protein resides in the cytoplasm. It catalyses the reaction ATP + H2O = ADP + phosphate + H(+). In terms of biological role, an ATPase that functions in gas vesicle formation. A minor component of the gas vesicle, also found in soluble extracts. Gas vesicles are hollow, gas filled proteinaceous nanostructures found in several microbial planktonic microorganisms. They allow positioning of halobacteria at the optimal depth for growth in the poorly aerated, shallow brine pools of their habitat. Its function is as follows. Expression of 2 c-vac DNA fragments containing 2 divergently transcribed regions (gvpE-gvpF-gvpG-gvpH-gvpI-gvpJ-gvpK-gvpL-gvpM and gvpA-gvpC-gvpN-gvpO) allows H.volcanii to produce gas vesicles. The sequence is that of Gas vesicle ATPase GvpN2 from Halobacterium salinarum (strain ATCC 700922 / JCM 11081 / NRC-1) (Halobacterium halobium).